Consider the following 177-residue polypeptide: RNA polymerase sigma-E factor (177 aa).

The Polymerase core binding signature appears at 34–47 (DLLQTALARTYGRW). A DNA-binding region (H-T-H motif) is located at residues 128-147 (TEETAAALGMSAGTVKSTLH).

The protein belongs to the sigma-70 factor family. ECF subfamily.

Its subcellular location is the cytoplasm. Its function is as follows. Sigma factors are initiation factors that promote the attachment of RNA polymerase to specific initiation sites and are then released. This sigma factor is required for normal cell wall integrity; it is recruited by RNA polymerase to transcribe genes with cell wall-related functions. It is also involved in the transcription of the dagA gene coding for an extracellular agar-degrading enzyme. This is RNA polymerase sigma-E factor (sigE) from Streptomyces coelicolor (strain ATCC BAA-471 / A3(2) / M145).